The primary structure comprises 1680 residues: RAF-like serine/threonine-protein kinase PRAF (1680 aa).

The interval 86–163 (FSPSDPHNSV…TPSDDGKDFP (78 aa)) is disordered. The PB1 domain occupies 166-267 (RVKFMCSFGG…SRLRVFLFPA (102 aa)). Disordered regions lie at residues 363–388 (LTGN…PLLA), 417–516 (PQYT…DSQQ), 556–580 (PDML…QPQQ), 594–613 (GANH…SQQF), 641–672 (QSTS…PQLQ), 700–725 (RSFR…LHRQ), and 1186–1226 (LPNA…LGGQ). The segment covering 366 to 388 (NLSNRSNAPSAPSSAPSSPPLLA) has biased composition (low complexity). The segment covering 446-482 (HEMHYRSTDSRRGPESPPKKFHDALHQDHPITVEQRR) has biased composition (basic and acidic residues). Low complexity-rich tracts occupy residues 560–580 (QSSG…QPQQ) and 603–613 (QGDQQQQSQQF). Residues 641–651 (QSTSYHGSAPS) are compositionally biased toward polar residues. Over residues 1204–1217 (SRSSSSSLSELSKS) the composition is skewed to low complexity. Ser1248 carries the post-translational modification Phosphoserine. The span at 1339 to 1354 (ASTVDKENQEEVRTGL) shows a compositional bias: basic and acidic residues. Residues 1339–1372 (ASTVDKENQEEVRTGLDEPADEDKANSTGLGSDP) form a disordered region. Ser1365 carries the phosphoserine modification. A Protein kinase domain is found at 1389–1655 (LEELRELGSG…SDIAKELRTM (267 aa)). Residues 1395 to 1403 (LGSGTFGTV) and Lys1416 contribute to the ATP site. Residue Asp1518 is the Proton acceptor of the active site. Positions 1661 to 1680 (PKTQAQTQGQSHPHPQMQIV) are disordered.

Belongs to the protein kinase superfamily. Ser/Thr protein kinase family. Hyperphosphorylated in response to auxin. Its phosphorylation state is also rapidly stimulated by photosynthetic activity (e.g. in response to blue light and red light irradiation); dephosphorylated in the darkness.

The protein resides in the cytoplasm. It catalyses the reaction L-seryl-[protein] + ATP = O-phospho-L-seryl-[protein] + ADP + H(+). The catalysed reaction is L-threonyl-[protein] + ATP = O-phospho-L-threonyl-[protein] + ADP + H(+). Its activity is regulated as follows. Activated by auxin via rapid phosphorylation. Regulated by photosynthesis-activity-dependent changes in its phosphorylation status. RAF-like protein kinase acting as a central mediator of a fast response pathway to auxin involving proteins phosphorylation, and leading to rapid cellular responses including membrane depolarization and cytoplasmic streaming. Required for general growth and developmental process. Photosynthesis signaling kinase involved in the regulation of the sucrose metabolism involving PGM1. Necessary for optimal chloroplast electron transport rate (ETR). The chain is RAF-like serine/threonine-protein kinase PRAF from Marchantia polymorpha (Common liverwort).